The sequence spans 877 residues: Alanine--tRNA ligase (877 aa).

Zn(2+) contacts are provided by His563, His567, Cys667, and His671.

The protein belongs to the class-II aminoacyl-tRNA synthetase family. The cofactor is Zn(2+).

The protein resides in the cytoplasm. It carries out the reaction tRNA(Ala) + L-alanine + ATP = L-alanyl-tRNA(Ala) + AMP + diphosphate. Functionally, catalyzes the attachment of alanine to tRNA(Ala) in a two-step reaction: alanine is first activated by ATP to form Ala-AMP and then transferred to the acceptor end of tRNA(Ala). Also edits incorrectly charged Ser-tRNA(Ala) and Gly-tRNA(Ala) via its editing domain. This is Alanine--tRNA ligase from Cytophaga hutchinsonii (strain ATCC 33406 / DSM 1761 / CIP 103989 / NBRC 15051 / NCIMB 9469 / D465).